A 411-amino-acid chain; its full sequence is Glutamate dehydrogenase 1 (411 aa).

Lys102 is an active-site residue.

The protein belongs to the Glu/Leu/Phe/Val dehydrogenases family.

It catalyses the reaction L-glutamate + NAD(+) + H2O = 2-oxoglutarate + NH4(+) + NADH + H(+). The catalysed reaction is L-glutamate + NADP(+) + H2O = 2-oxoglutarate + NH4(+) + NADPH + H(+). The polypeptide is Glutamate dehydrogenase 1 (GDH1) (Arabidopsis thaliana (Mouse-ear cress)).